The primary structure comprises 77 residues: DNA-directed RNA polymerase subunit epsilon (77 aa).

Belongs to the RNA polymerase subunit epsilon family. RNAP is composed of a core of 2 alpha, a beta and a beta' subunit. The core is associated with a delta subunit, and at least one of epsilon or omega. When a sigma factor is associated with the core the holoenzyme is formed, which can initiate transcription.

The catalysed reaction is RNA(n) + a ribonucleoside 5'-triphosphate = RNA(n+1) + diphosphate. Its function is as follows. A non-essential component of RNA polymerase (RNAP). This Streptococcus pneumoniae (strain P1031) protein is DNA-directed RNA polymerase subunit epsilon.